The sequence spans 65 residues: Hirudin-2 (65 aa).

The tract at residues 1-3 (ITY) is interaction with thrombin active site. Disulfide bonds link cysteine 6–cysteine 14, cysteine 16–cysteine 28, and cysteine 22–cysteine 39. Positions 39–65 (CVTGEGTPKPQSHNDGDFEEIPEEYLQ) are disordered. Threonine 45 is a glycosylation site (O-linked (GalNAc...) threonine). Residues 55 to 65 (DFEEIPEEYLQ) form an interaction with fibrinogen-binding exosite of thrombin region. Positions 55-65 (DFEEIPEEYLQ) are enriched in acidic residues. Tyrosine 63 carries the sulfotyrosine modification.

It belongs to the protease inhibitor I14 (hirudin) family.

Its subcellular location is the secreted. In terms of biological role, hirudin is a potent thrombin-specific protease inhibitor. It forms a stable non-covalent complex with alpha-thrombin, thereby abolishing its ability to cleave fibrinogen. This is Hirudin-2 from Hirudo medicinalis (Medicinal leech).